Reading from the N-terminus, the 285-residue chain is MAATKLDGKLYRDEIFADLEQRVAALKEKGVTPGLATVLVGDDPASHSYVRMKHKDCEQIGVNSIRKDLPADVSQEELNAVIDELNADDACTGYIVQLPLPKHLDENAVLERIDPDKDADGLHPVNLGKLVLNEPAPLPCTPNGAIHLLRRFDVELNGAKVVVIGRGVTVGRPIGLMLTRRSENSTVTLCHTGTKDLAAETKAADVIVAAAGVPHMITADMVKPGAAILDVGVSRGEDGKLKGDVHPDVWDVAGAVSPNPGGVGPLTRAFLVRNVVERAEKLLRA.

NADP(+) contacts are provided by residues G165–G167, T192, and V233.

The protein belongs to the tetrahydrofolate dehydrogenase/cyclohydrolase family. Homodimer.

It carries out the reaction (6R)-5,10-methylene-5,6,7,8-tetrahydrofolate + NADP(+) = (6R)-5,10-methenyltetrahydrofolate + NADPH. It catalyses the reaction (6R)-5,10-methenyltetrahydrofolate + H2O = (6R)-10-formyltetrahydrofolate + H(+). It functions in the pathway one-carbon metabolism; tetrahydrofolate interconversion. Functionally, catalyzes the oxidation of 5,10-methylenetetrahydrofolate to 5,10-methenyltetrahydrofolate and then the hydrolysis of 5,10-methenyltetrahydrofolate to 10-formyltetrahydrofolate. The chain is Bifunctional protein FolD from Corynebacterium jeikeium (strain K411).